Here is a 624-residue protein sequence, read N- to C-terminus: DNA-directed RNA polymerase subunit gamma (624 aa).

Residues Cys70, Cys72, Cys85, and Cys88 each contribute to the Zn(2+) site. Residues Asp466, Asp468, and Asp470 each contribute to the Mg(2+) site.

The protein belongs to the RNA polymerase beta' chain family. RpoC1 subfamily. In cyanobacteria the RNAP catalytic core is composed of 2 alpha, 1 beta, 1 beta', 1 gamma and 1 omega subunit. When a sigma factor is associated with the core the holoenzyme is formed, which can initiate transcription. The cofactor is Mg(2+). Zn(2+) serves as cofactor.

It catalyses the reaction RNA(n) + a ribonucleoside 5'-triphosphate = RNA(n+1) + diphosphate. Functionally, DNA-dependent RNA polymerase catalyzes the transcription of DNA into RNA using the four ribonucleoside triphosphates as substrates. This chain is DNA-directed RNA polymerase subunit gamma, found in Synechococcus sp. (strain ATCC 27144 / PCC 6301 / SAUG 1402/1) (Anacystis nidulans).